We begin with the raw amino-acid sequence, 342 residues long: Organic solute transporter alpha-like protein 2 (342 aa).

Residues 1–50 (MLEISPWETLVKLLTDSLLNCTGTHEDVPHAKTFLRSLTTTYIASLAVAT) are Extracellular-facing. Asn20 is a glycosylation site (N-linked (GlcNAc...) asparagine). A helical transmembrane segment spans residues 51–71 (AVTVGTVCLAVLHLIYIHFYI). Residues 72 to 79 (THSSRRLH) lie on the Cytoplasmic side of the membrane. A helical membrane pass occupies residues 80-100 (IVLLACTAPLVSLLALVAMYM). Residues 101–109 (PRVWFLSHL) are Extracellular-facing. The helical transmembrane segment at 110–130 (LSFLYFSFALWVIICLLLHIF) threads the bilayer. Residues 131–176 (DGHHALVTKMMQRLQYVEIATPPFCCLFPCLPKVRLEGKKIRWCEL) are Cytoplasmic-facing. A helical transmembrane segment spans residues 177–197 (MVMQAPIVRLFATLVSLVIYF). Topologically, residues 198–208 (EYQDQGLVPLK) are extracellular. Residues 209 to 229 (VLDFITLPSLLAGIYGTHILV) traverse the membrane as a helical segment. Topologically, residues 230–243 (TTVSRMDELISYRY) are cytoplasmic. The chain crosses the membrane as a helical span at residues 244–264 (VVVFRLLDFFFMVFGLQQPVF). The Extracellular portion of the chain corresponds to 265-290 (DFLARYGAFGCGTVLPAIETSFYWKN). A helical transmembrane segment spans residues 291–311 (FFTVIEAFCVTLISTVLLQPS). The Cytoplasmic portion of the chain corresponds to 312–342 (KSSFFDKHPSCRSMSSARSTITDVDTDESTT).

The protein belongs to the OST-alpha family.

It is found in the cell membrane. Its function is as follows. Probable transporter. This chain is Organic solute transporter alpha-like protein 2 (osta-2), found in Caenorhabditis elegans.